The primary structure comprises 268 residues: MTLQKKIIELLGVKPAIIPEIEIKNCVDFLKKYLVNHVHIKSLIVGVSGGQDSTLTAKLCQMTAETLRKEKNDITYQFIALRLPYGIQYDEKDCQDAIRFIQPDQIFNVNIKKAVLSSEKSLKKSGVIISDYVRGNEKARERMKVQYSVAAMKQGLVVGTGHAAENITGFFTKYGDSGTDINPIAKLNKRQIRLLLKNLNCPKHLYLKKPMADLEDEHPQQDDESVLGVTYDVIDSYLEQKKIDIRSQKIIEALYLNTLHKRNLPITQ.

G46 to S53 contributes to the ATP binding site. Mg(2+) is bound at residue D52. Position 140 (R140) interacts with deamido-NAD(+). T160 serves as a coordination point for ATP. E165 contributes to the Mg(2+) binding site. The deamido-NAD(+) site is built by K173 and D180. K189 serves as a coordination point for ATP. H260–K261 provides a ligand contact to deamido-NAD(+).

The protein belongs to the NAD synthetase family. As to quaternary structure, homodimer.

The enzyme catalyses deamido-NAD(+) + NH4(+) + ATP = AMP + diphosphate + NAD(+) + H(+). It functions in the pathway cofactor biosynthesis; NAD(+) biosynthesis; NAD(+) from deamido-NAD(+) (ammonia route): step 1/1. Catalyzes the ATP-dependent amidation of deamido-NAD to form NAD. Uses ammonia as a nitrogen source. This is NH(3)-dependent NAD(+) synthetase from Buchnera aphidicola subsp. Acyrthosiphon pisum (strain Tuc7).